Reading from the N-terminus, the 255-residue chain is Putative glutamine amidotransferase YafJ (255 aa).

The For GATase activity role is filled by Cys2. One can recognise a Glutamine amidotransferase type-2 domain in the interval 2 to 251 (CELLGMSANV…PGEWRLFCLG (250 aa)).

This chain is Putative glutamine amidotransferase YafJ (yafJ), found in Escherichia coli (strain K12).